The sequence spans 215 residues: Large ribosomal subunit protein mL43 (215 aa).

It belongs to the mitochondrion-specific ribosomal protein mL43 family. As to quaternary structure, component of the mitochondrial large ribosomal subunit (mt-LSU). Mature mammalian 55S mitochondrial ribosomes consist of a small (28S) and a large (39S) subunit. The 28S small subunit contains a 12S ribosomal RNA (12S mt-rRNA) and 30 different proteins. The 39S large subunit contains a 16S rRNA (16S mt-rRNA), a copy of mitochondrial valine transfer RNA (mt-tRNA(Val)), which plays an integral structural role, and 52 different proteins. As to expression, high relative levels in skeletal muscle and testis. Lower levels of expression in the heart, brain, placenta, lung, liver, kidney, pancreas, spleen, thymus, prostate, ovary, small intestine, colon and leukocytes. Expression is coregulated with TWNK.

The protein localises to the mitochondrion. In Homo sapiens (Human), this protein is Large ribosomal subunit protein mL43 (MRPL43).